We begin with the raw amino-acid sequence, 1379 residues long: Partitioning defective protein 3 (1379 aa).

Over residues 1–23 (MSASSTSSSSTSCPEGGEPSGSC) the composition is skewed to low complexity. 2 disordered regions span residues 1 to 32 (MSAS…GEST) and 208 to 335 (YNVG…SDRK). Composition is skewed to polar residues over residues 239–256 (SFDQ…PKPS) and 272–284 (ILRS…ASGS). Basic and acidic residues-rich tracts occupy residues 302-315 (EVEK…ERKS) and 322-335 (DKNP…SDRK). PDZ domains follow at residues 381 to 483 (LVTF…IINR) and 515 to 599 (VVEL…SRVS). A coiled-coil region spans residues 606–626 (TSASSENKENEETLKVVEEEK). The PDZ 3 domain maps to 659–750 (VIPFINGSSS…EVGMISSNVR (92 aa)). 5 disordered regions span residues 767–873 (DLSR…MGAA), 887–918 (HQRQ…RSPM), 949–1085 (QSME…GGNV), 1273–1301 (VEPV…SGSS), and 1350–1379 (AYET…FPQY). Low complexity-rich tracts occupy residues 776-786 (SSPSPSSRMSS) and 798-826 (ATRG…AVPA). Basic and acidic residues-rich tracts occupy residues 828 to 844 (LTER…RNDE) and 854 to 869 (FNRE…EKRG). Residues 894–912 (PTSSTQKRSKSQPRSSSQR) are compositionally biased toward low complexity. Residues 967 to 977 (QIPTGSSSKVQ) are compositionally biased toward polar residues. Basic and acidic residues-rich tracts occupy residues 1030 to 1040 (KSRDASPEKTP) and 1048 to 1060 (SVER…DERN). Residues 1290–1301 (STSSGAVASGSS) show a composition bias toward low complexity.

This sequence belongs to the PAR3 family. As to quaternary structure, required, together with pkc-3, for the localization of par-6; par-6 is involved in localizing/maintaining par-3 at the cell periphery. Interacts with par-6 and pkc-3 for localization at the periphery of anterior cortex of the embryo. As to expression, asymmetrically distributed at the periphery of the zygote and in dividing blastomeres of the germline lineage. Coexpressed with par-6; patchy expression observed at the periphery after completion of meiosis I and in meiosis II. On completion of metaphase II, expression is restricted to the anterior 85% of embryo length; this decreases to 55% in embryos between prophase and telophase of the first mitosis. During the first cleavage, expression is detected in the advancing furrow. Transiently coexpressed and colocalized asymmetrically with par-6 and pkc-3, in the developing somatic gonad, including the spermathecal precursor cells of L4 larvae.

The protein resides in the cytoplasm. In cooperation with pkc-3, required for establishing cell polarity and regulating spindle orientation in the early embryo. Localization is crucial for recruiting par-6 and pkc-3 to the peripheral apical cortex and restricting par-2 to basolateral surfaces. Necessary for apicobasal and anterior-posterior asymmetries associated with cell adhesion and gastrulation during the first few cycles of embryogenesis, and also for epithelial cell polarity in the distal spermatheca. Regulates the asymmetric localization of csnk-1, ppk-1 and gpr-1/2 during the first embryonic division. The sequence is that of Partitioning defective protein 3 from Caenorhabditis elegans.